The sequence spans 236 residues: Ribonuclease PH (236 aa).

Phosphate contacts are provided by residues Arg86 and 124–126 (GTR).

The protein belongs to the RNase PH family. As to quaternary structure, homohexameric ring arranged as a trimer of dimers.

It catalyses the reaction tRNA(n+1) + phosphate = tRNA(n) + a ribonucleoside 5'-diphosphate. Functionally, phosphorolytic 3'-5' exoribonuclease that plays an important role in tRNA 3'-end maturation. Removes nucleotide residues following the 3'-CCA terminus of tRNAs; can also add nucleotides to the ends of RNA molecules by using nucleoside diphosphates as substrates, but this may not be physiologically important. Probably plays a role in initiation of 16S rRNA degradation (leading to ribosome degradation) during starvation. The chain is Ribonuclease PH from Thermodesulfovibrio yellowstonii (strain ATCC 51303 / DSM 11347 / YP87).